The sequence spans 506 residues: Anaerobic nitric oxide reductase transcription regulator NorR (506 aa).

D57 bears the 4-aspartylphosphate mark. Positions 187–416 (MIGLSPAMTQ…LEHAIHRAVV (230 aa)) constitute a Sigma-54 factor interaction domain. Residues 215 to 222 (GETGTGKE) and 278 to 287 (ADNGTLFLDE) each bind ATP. The segment at residues 481-500 (WAASARALETDVANLHRLAK) is a DNA-binding region (H-T-H motif).

Its pathway is nitrogen metabolism; nitric oxide reduction. Required for the expression of anaerobic nitric oxide (NO) reductase, acts as a transcriptional activator for at least the norVW operon. Activation also requires sigma-54. The polypeptide is Anaerobic nitric oxide reductase transcription regulator NorR (Salmonella paratyphi C (strain RKS4594)).